A 331-amino-acid chain; its full sequence is UDP-GalNAc:beta-1,3-N-acetylgalactosaminyltransferase 1 (331 aa).

Topologically, residues 1–20 (MAPAVLTAIPNRMSLRSLKW) are cytoplasmic. Residues 21-43 (SLLLLSLLSFLVIWYLSLPHYNV) form a helical; Signal-anchor for type II membrane protein membrane-spanning segment. At 44–331 (IERVNWMYFY…VMLRNTTCHY (288 aa)) the chain is on the lumenal side. Asn-72, Asn-154, Asn-198, Asn-212, and Asn-326 each carry an N-linked (GlcNAc...) asparagine glycan.

This sequence belongs to the glycosyltransferase 31 family. The cofactor is Mg(2+).

The protein localises to the golgi apparatus membrane. The catalysed reaction is a globoside Gb3Cer (d18:1(4E)) + UDP-N-acetyl-alpha-D-galactosamine = a globoside Gb4Cer (d18:1(4E)) + UDP + H(+). It participates in protein modification; protein glycosylation. Transfers N-acetylgalactosamine onto globotriaosylceramide. Plays a critical role in preimplantation stage embryonic development. The protein is UDP-GalNAc:beta-1,3-N-acetylgalactosaminyltransferase 1 (B3galnt1) of Rattus norvegicus (Rat).